The primary structure comprises 224 residues: ATP synthase subunit a (224 aa).

A run of 6 helical transmembrane segments spans residues 17-37 (FSLNWLSTFLGLLMIPSIYWL), 72-92 (IFISLFSLILFNNFMGLFPYI), 99-119 (LTLTLSLALPLWLCFMLYGWI), 125-145 (MFAHLVPQGTPAILMPFMVCI), 166-186 (IAGHLLLTLLGNTGPSMSYIL), and 187-207 (VTFLLMAQIALLVLESAVAMI).

This sequence belongs to the ATPase A chain family. In terms of assembly, F-type ATPases have 2 components, CF(1) - the catalytic core - and CF(0) - the membrane proton channel. CF(1) has five subunits: alpha(3), beta(3), gamma(1), delta(1), epsilon(1). CF(0) has three main subunits: a, b and c.

The protein localises to the mitochondrion inner membrane. Functionally, mitochondrial membrane ATP synthase (F(1)F(0) ATP synthase or Complex V) produces ATP from ADP in the presence of a proton gradient across the membrane which is generated by electron transport complexes of the respiratory chain. F-type ATPases consist of two structural domains, F(1) - containing the extramembraneous catalytic core and F(0) - containing the membrane proton channel, linked together by a central stalk and a peripheral stalk. During catalysis, ATP synthesis in the catalytic domain of F(1) is coupled via a rotary mechanism of the central stalk subunits to proton translocation. Key component of the proton channel; it may play a direct role in the translocation of protons across the membrane. The chain is ATP synthase subunit a (mt:ATPase6) from Drosophila melanogaster (Fruit fly).